A 768-amino-acid polypeptide reads, in one-letter code: Cullin-3 (768 aa).

Residue S2 is modified to N-acetylserine. The segment at 2–41 (SNLSKGTGSRKDTKMRIRAFPMTMDEKYVNSIWDLLKNAI) is interaction with KLHL18. Residue S585 is modified to Phosphoserine. The disordered stretch occupies residues 677–698 (VAAKQGESDPERKETRQKVDDD). Over residues 682–698 (GESDPERKETRQKVDDD) the composition is skewed to basic and acidic residues. The Cullin neddylation domain occupies 698 to 760 (DRKHEIEAAI…REYLARTPED (63 aa)). A Glycyl lysine isopeptide (Lys-Gly) (interchain with G-Cter in NEDD8) cross-link involves residue K712.

Belongs to the cullin family. In terms of assembly, forms neddylation-dependent homodimers. Component of multiple BCR (BTB-CUL3-RBX1) E3 ubiquitin-protein ligase complexes formed of CUL3, RBX1 and a variable BTB domain-containing protein acting as both, adapter to cullin and substrate recognition subunit. The BCR complex may be active as a heterodimeric complex, in which NEDD8, covalently attached to one CUL3 molecule, binds to the C-terminus of a second CUL3 molecule. Interacts with RBX1, RNF7, CYCE and TIP120A/CAND1. Part of the BCR(SPOP) containing SPOP, and of BCR containing homodimeric SPOPL or the heterodimer formed by SPOP and SPOPL. Part of the probable BCR(KLHL9-KLHL13) complex with BTB domain proteins KLHL9 and KLHL13. Part of the BCR(KLHL41) complex containing KLHL41. Component of the BCR(KLHL12) E3 ubiquitin ligase complex, at least composed of CUL3 and KLHL12 and RBX1. Component of the BCR(KLHL3) E3 ubiquitin ligase complex, at least composed of CUL3 and KLHL3 and RBX1. Part of the BCR(ENC1) complex containing ENC1. Part of a complex consisting of BMI1/PCGF4, CUL3 and SPOP. Part of a complex consisting of BRMS1, CUL3 and SPOP. Component of the BCR(KLHL21) E3 ubiquitin ligase complex, at least composed of CUL3, KLHL21 and RBX1. Component of the BCR(KLHL22) E3 ubiquitin ligase complex, at least composed of CUL3, KLHL22 and RBX1. Component of the BCR(KLHL25) E3 ubiquitin ligase complex, at least composed of CUL3, KLHL25 and RBX1. Part of a complex consisting of MACROH2A1, CUL3 and SPOP. Component of the BCR(KLHL42) E3 ubiquitin ligase complex, at least composed of CUL3 and KLHL42. Interacts with KLHL42 (via the BTB domain). Interacts with KATNA1; the interaction is enhanced by KLHL42. Component of the BCR(KBTBD8) E3 ubiquitin ligase complex, at least composed of CUL3, KBTBD8 and RBX1. Interacts with KCTD5, KLHL9, KLHL11, KLHL13, GAN, ZBTB16, KLHL3, KLHL15, KLHL20, KLHL36, GMCL2, BTBD1. Part of a complex that contains CUL3, RBX1 and GAN. Interacts (via BTB domain) with KLHL17; the interaction regulates surface GRIK2 expression. Interacts with KCTD7. Part of the BCR(GAN) complex containing GAN. Part of the BCR(KEAP1) complex containing KEAP1. Interacts with KLHL10. Interacts with KAT5 and ATF2. Interacts with KCTD17 in the BCR(KCTD17) E3 ubiquitin ligase complex, at least composed of CUL3, KCTD17 and RBX1. Interacts (when neddylated) with ARIH1; leading to activate the E3 ligase activity of ARIH1. Interacts with COPS9 isoform 2. Interacts with PPP2R5B; this interaction is indirect and mediated through KLHL15-binding and leads to PPP2R5B proteasomal degradation. Interacts with RBBP8/CtIP; this interaction is indirect and mediated through KLHL15-binding and leads to RBBP8 proteasomal degradation. Interacts with KLHL24 in the BCR(KLHL24) E3 ubiquitin ligase complex, composed of CUL3, RBX1 and KLHL24. Interacts with RHOBTB2. Interacts with AURKA and KLHL18 (via BTB domain). Interacts (unneddylated form) with DCUN1D1, DCUN1D2, DCUN1D3, DCUN1D4 and DCUN1D5; these interactions promote the cullin neddylation. Component of a BCR3 (BTB-CUL3-RBX1) E3 ubiquitin ligase complex, also named Cul3-RING ubiquitin ligase complex CUL3(KBTBD6/7), composed of CUL3, RBX1, KBTBD6 and KBTBD7. Component of the BCR(KBTBD2) E3 ubiquitin ligase complex, at least composed of CUL3, KBTBD2 and RBX1. Interacts with KBTBD2 (via the BTB domain). Component of the BCR(KBTBD4) E3 ubiquitin ligase complex, at least composed of CUL3, KBTBD4 and RBX1. Component of the BCR(ARMC5) E3 ubiquitin ligase complex, composed of CUL3, ARMC5 and RBX1. Post-translationally, neddylated. Attachment of NEDD8 is required for the E3 ubiquitin-protein ligase activity of the BCR complex. Deneddylated via its interaction with the COP9 signalosome (CSN) complex. In terms of tissue distribution, brain, spermatozoa, and testis (at protein level). Widely expressed.

Its subcellular location is the nucleus. The protein localises to the golgi apparatus. It is found in the cell projection. It localises to the cilium. The protein resides in the flagellum. Its subcellular location is the cytoplasm. The protein localises to the cytoskeleton. It is found in the spindle. It localises to the microtubule organizing center. The protein resides in the centrosome. Its subcellular location is the spindle pole. Its pathway is protein modification; protein ubiquitination. Its function is as follows. Core component of multiple cullin-RING-based BCR (BTB-CUL3-RBX1) E3 ubiquitin-protein ligase complexes which mediate the ubiquitination and subsequent proteasomal degradation of target proteins. BCR complexes and ARIH1 collaborate in tandem to mediate ubiquitination of target proteins. As a scaffold protein may contribute to catalysis through positioning of the substrate and the ubiquitin-conjugating enzyme. The E3 ubiquitin-protein ligase activity of the complex is dependent on the neddylation of the cullin subunit and is inhibited by the association of the deneddylated cullin subunit with TIP120A/CAND1. The functional specificity of the BCR complex depends on the BTB domain-containing protein as the substrate recognition component. BCR(KLHL42) is involved in ubiquitination of KATNA1. BCR(SPOP) is involved in ubiquitination of BMI1/PCGF4, BRMS1, MACROH2A1 and DAXX, GLI2 and GLI3. Can also form a cullin-RING-based BCR (BTB-CUL3-RBX1) E3 ubiquitin-protein ligase complex containing homodimeric SPOPL or the heterodimer formed by SPOP and SPOPL; these complexes have lower ubiquitin ligase activity. BCR(KLHL9-KLHL13) controls the dynamic behavior of AURKB on mitotic chromosomes and thereby coordinates faithful mitotic progression and completion of cytokinesis. BCR(KLHL12) is involved in ER-Golgi transport by regulating the size of COPII coats, thereby playing a key role in collagen export, which is required for embryonic stem (ES) cells division: BCR(KLHL12) acts by mediating monoubiquitination of SEC31 (SEC31A or SEC31B). BCR(KLHL3) acts as a regulator of ion transport in the distal nephron; by mediating ubiquitination of WNK4. The BCR(KLHL20) E3 ubiquitin ligase complex is involved in interferon response and anterograde Golgi to endosome transport: it mediates both ubiquitination leading to degradation and 'Lys-33'-linked ubiquitination. The BCR(KLHL21) E3 ubiquitin ligase complex regulates localization of the chromosomal passenger complex (CPC) from chromosomes to the spindle midzone in anaphase and mediates the ubiquitination of AURKB. The BCR(KLHL22) ubiquitin ligase complex mediates monoubiquitination of PLK1, leading to PLK1 dissociation from phosphoreceptor proteins and subsequent removal from kinetochores, allowing silencing of the spindle assembly checkpoint (SAC) and chromosome segregation. The BCR(KLHL22) ubiquitin ligase complex is also responsible for the amino acid-stimulated 'Lys-48' polyubiquitination and proteasomal degradation of DEPDC5. Through the degradation of DEPDC5, releases the GATOR1 complex-mediated inhibition of the TORC1 pathway. The BCR(KLHL25) ubiquitin ligase complex is involved in translational homeostasis by mediating ubiquitination and subsequent degradation of hypophosphorylated EIF4EBP1 (4E-BP1). The BCR(KLHL25) ubiquitin ligase complex is also involved in lipid synthesis by mediating ubiquitination and degradation of ACLY. The BCR(KBTBD8) complex acts by mediating monoubiquitination of NOLC1 and TCOF1, leading to remodel the translational program of differentiating cells in favor of neural crest specification. Involved in ubiquitination of cyclin E and of cyclin D1 (in vitro) thus involved in regulation of G1/S transition. Involved in the ubiquitination of KEAP1, ENC1 and KLHL41. In concert with ATF2 and RBX1, promotes degradation of KAT5 thereby attenuating its ability to acetylate and activate ATM. The BCR(KCTD17) E3 ubiquitin ligase complex mediates ubiquitination and degradation of TCHP, a down-regulator of cilium assembly, thereby inducing ciliogenesis. The BCR(KLHL24) E3 ubiquitin ligase complex mediates ubiquitination of KRT14, controls KRT14 levels during keratinocytes differentiation, and is essential for skin integrity. The BCR(KLHL18) E3 ubiquitin ligase complex mediates the ubiquitination of AURKA leading to its activation at the centrosome which is required for initiating mitotic entry. The BCR(KEAP1) E3 ubiquitin ligase complex acts as a key sensor of oxidative and electrophilic stress by mediating ubiquitination and degradation of NFE2L2/NRF2, a transcription factor regulating expression of many cytoprotective genes. As part of the CUL3(KBTBD6/7) E3 ubiquitin ligase complex functions mediates 'Lys-48' ubiquitination and proteasomal degradation of TIAM1. By controlling the ubiquitination of that RAC1 guanine exchange factors (GEF), regulates RAC1 signal transduction and downstream biological processes including the organization of the cytoskeleton, cell migration and cell proliferation. The BCR(KBTBD4) E3 ubiquitin ligase complex targets CoREST corepressor complex components RCOR1, KDM1A/LSD1 and HDAC2 for proteasomal degradation with RCOR1 likely to be the primary target while degradation of KDM1A and HDAC2 is likely due to their association with RCOR1. It also targets RCOR3, MIER2 and MIER3 for proteasomal degradation as well as associated proteins ZNF217 and RREB1 with degradation being dependent on the presence of an ELM2 domain in the target proteins. The BCR(ARMC5) complex mediates premature transcription termination of transcripts that are unfavorably configured for transcriptional elongation by mediating ubiquitination of Pol II subunit POLR2A. Required for 'Lys-63'-linked ubiquitination of large ribosomal subunit protein MRPL12. The protein is Cullin-3 of Homo sapiens (Human).